The primary structure comprises 400 residues: Phosphoglycerate kinase (400 aa).

Substrate contacts are provided by residues 24–26, Arg39, 62–65, Arg121, and Arg154; these read DFN and HFGR. ATP is bound by residues Lys205, Gly296, Glu327, and 356 to 359; that span reads GGDS.

The protein belongs to the phosphoglycerate kinase family. In terms of assembly, monomer.

The protein localises to the cytoplasm. The enzyme catalyses (2R)-3-phosphoglycerate + ATP = (2R)-3-phospho-glyceroyl phosphate + ADP. The protein operates within carbohydrate degradation; glycolysis; pyruvate from D-glyceraldehyde 3-phosphate: step 2/5. In Rippkaea orientalis (strain PCC 8801 / RF-1) (Cyanothece sp. (strain PCC 8801)), this protein is Phosphoglycerate kinase.